The chain runs to 91 residues: DNA-directed RNA polymerase subunit omega (91 aa).

This sequence belongs to the RNA polymerase subunit omega family. The RNAP catalytic core consists of 2 alpha, 1 beta, 1 beta' and 1 omega subunit. When a sigma factor is associated with the core the holoenzyme is formed, which can initiate transcription.

It carries out the reaction RNA(n) + a ribonucleoside 5'-triphosphate = RNA(n+1) + diphosphate. In terms of biological role, promotes RNA polymerase assembly. Latches the N- and C-terminal regions of the beta' subunit thereby facilitating its interaction with the beta and alpha subunits. The polypeptide is DNA-directed RNA polymerase subunit omega (Yersinia enterocolitica serotype O:8 / biotype 1B (strain NCTC 13174 / 8081)).